The chain runs to 218 residues: Large ribosomal subunit protein uL2c (218 aa).

Residues 165–192 form a disordered region; that stretch reads GVVKNPVDHPHGGGEGRSPIGRSHPVTP.

Belongs to the universal ribosomal protein uL2 family. Part of the 50S ribosomal subunit.

Its subcellular location is the plastid. It localises to the chloroplast. The polypeptide is Large ribosomal subunit protein uL2c (rpl2) (Bigelowiella natans (Pedinomonas minutissima)).